Here is a 119-residue protein sequence, read N- to C-terminus: Large ribosomal subunit protein uL22 (119 aa).

This sequence belongs to the universal ribosomal protein uL22 family. In terms of assembly, part of the 50S ribosomal subunit.

Functionally, this protein binds specifically to 23S rRNA; its binding is stimulated by other ribosomal proteins, e.g. L4, L17, and L20. It is important during the early stages of 50S assembly. It makes multiple contacts with different domains of the 23S rRNA in the assembled 50S subunit and ribosome. In terms of biological role, the globular domain of the protein is located near the polypeptide exit tunnel on the outside of the subunit, while an extended beta-hairpin is found that lines the wall of the exit tunnel in the center of the 70S ribosome. The polypeptide is Large ribosomal subunit protein uL22 (Bifidobacterium adolescentis (strain ATCC 15703 / DSM 20083 / NCTC 11814 / E194a)).